Reading from the N-terminus, the 456-residue chain is Kynurenine 3-monooxygenase (456 aa).

It belongs to the aromatic-ring hydroxylase family. KMO subfamily. FAD serves as cofactor.

It is found in the mitochondrion outer membrane. The enzyme catalyses L-kynurenine + NADPH + O2 + H(+) = 3-hydroxy-L-kynurenine + NADP(+) + H2O. The protein operates within cofactor biosynthesis; NAD(+) biosynthesis; quinolinate from L-kynurenine: step 1/3. Functionally, catalyzes the hydroxylation of L-kynurenine (L-Kyn) to form 3-hydroxy-L-kynurenine (L-3OHKyn). Required for synthesis of quinolinic acid. The polypeptide is Kynurenine 3-monooxygenase (Candida albicans (strain SC5314 / ATCC MYA-2876) (Yeast)).